The chain runs to 734 residues: Photosystem I P700 chlorophyll a apoprotein A2 (734 aa).

8 consecutive transmembrane segments (helical) span residues 46-69 (IFAS…FHVA), 135-158 (LYTG…LHLQ), 175-199 (LNHH…HVAI), 273-291 (IAHH…GHMY), 330-353 (LHFQ…QHMY), 369-395 (AALY…IFFI), 417-439 (AIIS…LYVH), and 517-535 (FLVH…LILV). [4Fe-4S] cluster is bound by residues C559 and C568. Transmembrane regions (helical) follow at residues 575-596 (AFYL…YWHW) and 643-665 (LSVW…MFLI). The chlorophyll a site is built by H654, M662, and Y670. W671 lines the phylloquinone pocket. A helical membrane pass occupies residues 707–727 (LVGLAHFSVGYIFTYAAFLIA).

It belongs to the PsaA/PsaB family. In terms of assembly, the PsaA/B heterodimer binds the P700 chlorophyll special pair and subsequent electron acceptors. PSI consists of a core antenna complex that captures photons, and an electron transfer chain that converts photonic excitation into a charge separation. The eukaryotic PSI reaction center is composed of at least 11 subunits. Requires P700 is a chlorophyll a/chlorophyll a' dimer, A0 is one or more chlorophyll a, A1 is one or both phylloquinones and FX is a shared 4Fe-4S iron-sulfur center. as cofactor.

The protein localises to the plastid. The protein resides in the chloroplast thylakoid membrane. The catalysed reaction is reduced [plastocyanin] + hnu + oxidized [2Fe-2S]-[ferredoxin] = oxidized [plastocyanin] + reduced [2Fe-2S]-[ferredoxin]. In terms of biological role, psaA and PsaB bind P700, the primary electron donor of photosystem I (PSI), as well as the electron acceptors A0, A1 and FX. PSI is a plastocyanin-ferredoxin oxidoreductase, converting photonic excitation into a charge separation, which transfers an electron from the donor P700 chlorophyll pair to the spectroscopically characterized acceptors A0, A1, FX, FA and FB in turn. Oxidized P700 is reduced on the lumenal side of the thylakoid membrane by plastocyanin. This is Photosystem I P700 chlorophyll a apoprotein A2 from Nicotiana tabacum (Common tobacco).